The following is a 172-amino-acid chain: MFDAFTKVVAQADARGQFISTSEIDALAAMVSGRNKRLDAVSRISNNASTIVASAARELFAQQPALISPGGNAYTSRRMAACLRDMEIILRYVTYSAFTGDASVLEDRCLNGLRETYLALGTPGTSVAAGVNLMKDAALSIVNDRAGISNGDCASLSSEIGTYFDRAAASVA.

Asn-72 is subject to N4-methylasparagine. Residue Cys-82 coordinates (2R,3E)-phycocyanobilin. A (2R,3E)-phycoerythrobilin-binding site is contributed by Cys-153.

This sequence belongs to the phycobiliprotein family. In terms of assembly, heterodimer of an alpha and a beta chain. Contains two covalently linked bilin chromophores.

It localises to the cellular thylakoid membrane. Its function is as follows. Light-harvesting photosynthetic bile pigment-protein from the phycobiliprotein complex. The protein is R-phycocyanin-2 beta chain (rpcB) of Synechococcus sp. (strain WH8020).